A 399-amino-acid chain; its full sequence is Elongation factor Tu (399 aa).

One can recognise a tr-type G domain in the interval 10-207; sequence KPHLNIGTIG…AVDNYVPEPQ (198 aa). The interval 19–26 is G1; it reads GHIDHGKT. 19-26 is a binding site for GTP; it reads GHIDHGKT. Mg(2+) is bound at residue T26. Residues 60–64 are G2; that stretch reads GITIN. Residues 81 to 84 are G3; the sequence is DCPG. Residues 81 to 85 and 136 to 139 contribute to the GTP site; these read DCPGH and NKVD. The segment at 136-139 is G4; it reads NKVD. Residues 174-176 are G5; sequence SAL.

It belongs to the TRAFAC class translation factor GTPase superfamily. Classic translation factor GTPase family. EF-Tu/EF-1A subfamily. In terms of assembly, monomer.

It localises to the cytoplasm. The catalysed reaction is GTP + H2O = GDP + phosphate + H(+). In terms of biological role, GTP hydrolase that promotes the GTP-dependent binding of aminoacyl-tRNA to the A-site of ribosomes during protein biosynthesis. This is Elongation factor Tu from Kosmotoga olearia (strain ATCC BAA-1733 / DSM 21960 / TBF 19.5.1).